A 459-amino-acid polypeptide reads, in one-letter code: Bifunctional protein GlmU (459 aa).

Residues 1–229 (MSNFAIILAA…FDESLGVNDR (229 aa)) form a pyrophosphorylase region. UDP-N-acetyl-alpha-D-glucosamine-binding positions include 8-11 (LAAG), Lys22, Gln72, and 77-78 (GT). A Mg(2+)-binding site is contributed by Asp102. Positions 139, 154, 169, and 227 each coordinate UDP-N-acetyl-alpha-D-glucosamine. Residue Asn227 coordinates Mg(2+). Residues 230–250 (VALATAESVMRRRINHKHMVN) are linker. Residues 251-459 (GVSFVNPEAT…TRLPHHPKNQ (209 aa)) form an N-acetyltransferase region. 2 residues coordinate UDP-N-acetyl-alpha-D-glucosamine: Arg332 and Lys350. The Proton acceptor role is filled by His362. UDP-N-acetyl-alpha-D-glucosamine contacts are provided by Tyr365 and Asn376. Acetyl-CoA contacts are provided by residues Ala379, 385-386 (NY), Ser404, Ala422, and Arg439.

In the N-terminal section; belongs to the N-acetylglucosamine-1-phosphate uridyltransferase family. The protein in the C-terminal section; belongs to the transferase hexapeptide repeat family. In terms of assembly, homotrimer. The cofactor is Mg(2+).

It localises to the cytoplasm. It carries out the reaction alpha-D-glucosamine 1-phosphate + acetyl-CoA = N-acetyl-alpha-D-glucosamine 1-phosphate + CoA + H(+). The catalysed reaction is N-acetyl-alpha-D-glucosamine 1-phosphate + UTP + H(+) = UDP-N-acetyl-alpha-D-glucosamine + diphosphate. It functions in the pathway nucleotide-sugar biosynthesis; UDP-N-acetyl-alpha-D-glucosamine biosynthesis; N-acetyl-alpha-D-glucosamine 1-phosphate from alpha-D-glucosamine 6-phosphate (route II): step 2/2. The protein operates within nucleotide-sugar biosynthesis; UDP-N-acetyl-alpha-D-glucosamine biosynthesis; UDP-N-acetyl-alpha-D-glucosamine from N-acetyl-alpha-D-glucosamine 1-phosphate: step 1/1. It participates in bacterial outer membrane biogenesis; LPS lipid A biosynthesis. Catalyzes the last two sequential reactions in the de novo biosynthetic pathway for UDP-N-acetylglucosamine (UDP-GlcNAc). The C-terminal domain catalyzes the transfer of acetyl group from acetyl coenzyme A to glucosamine-1-phosphate (GlcN-1-P) to produce N-acetylglucosamine-1-phosphate (GlcNAc-1-P), which is converted into UDP-GlcNAc by the transfer of uridine 5-monophosphate (from uridine 5-triphosphate), a reaction catalyzed by the N-terminal domain. In Streptococcus pneumoniae serotype 2 (strain D39 / NCTC 7466), this protein is Bifunctional protein GlmU.